We begin with the raw amino-acid sequence, 503 residues long: MSTKLVDHVEITVPTGKTYIQPVGLFINNQHVDSVHGGRVKVYSPSTEKLICEVADADEEDVDIAVKVARAAFQTDAPWRKFSSAQRGRCLSRLADCIEQNLEYLASIETLDNGKSITLARGDVQAAADCFRYYGGWADKDYGQTIETDIKRFAYTRHEPIGVCGQIIPWNFPFLMCAWKIAPAVACGNTIILKTAELTPLSALCLTKFVPECGFPPGVINVLSGDGRRCGNAISSHMDIDKVAFTGSTGVGRMVMRAAASSNLKKVTLELGGKSPNIVFNDADLDSAAVWTNYGIFYNSGQVCCAGSRVYVQEDVYDEFIKRMVAKAKTLKVGDPFAEDTFQGAQVSKQQYERIVSYIESGIAHGAKLEIGGKRHGNLGYFVEPTILSNVTEDMAVGKEEIFGPVLAVIKFKTIEEAIRRGNNSTYGLAAGVHTNNITNAIKVSNALEAGTVWVNCYNLLHHQIPFGGYKESGIGRELGSYGLTNYTQTKAVHINLGMDSPI.

247-252 (GSTGVG) is a binding site for NAD(+). Position 248 is a phosphoserine (serine 248). Glutamate 270 acts as the Proton acceptor in catalysis. Cysteine 304 acts as the Nucleophile in catalysis. Position 501 is a phosphoserine (serine 501).

This sequence belongs to the aldehyde dehydrogenase family.

The polypeptide is Putative aldehyde dehydrogenase-like protein C9E9.09c (Schizosaccharomyces pombe (strain 972 / ATCC 24843) (Fission yeast)).